We begin with the raw amino-acid sequence, 146 residues long: Hemoglobin subunit beta (146 aa).

Val-1 bears the N-acetylvaline mark. A Globin domain is found at 2 to 146 (HLTAEEKSLV…VANALAHKYH (145 aa)). A Phosphoserine modification is found at Ser-44. Lys-59 is modified (N6-acetyllysine). His-63 is a heme b binding site. An N6-acetyllysine modification is found at Lys-82. His-92 lines the heme b pocket. Cys-93 carries the S-nitrosocysteine modification. At Lys-144 the chain carries N6-acetyllysine.

This sequence belongs to the globin family. Heterotetramer of two alpha chains and two beta chains. In terms of tissue distribution, red blood cells.

Involved in oxygen transport from the lung to the various peripheral tissues. This Canis latrans (Coyote) protein is Hemoglobin subunit beta (HBB).